We begin with the raw amino-acid sequence, 273 residues long: Imidazole glycerol phosphate synthase subunit HisF (273 aa).

Residues Asp11 and Asp134 contribute to the active site.

It belongs to the HisA/HisF family. As to quaternary structure, heterodimer of HisH and HisF.

The protein resides in the cytoplasm. The catalysed reaction is 5-[(5-phospho-1-deoxy-D-ribulos-1-ylimino)methylamino]-1-(5-phospho-beta-D-ribosyl)imidazole-4-carboxamide + L-glutamine = D-erythro-1-(imidazol-4-yl)glycerol 3-phosphate + 5-amino-1-(5-phospho-beta-D-ribosyl)imidazole-4-carboxamide + L-glutamate + H(+). The protein operates within amino-acid biosynthesis; L-histidine biosynthesis; L-histidine from 5-phospho-alpha-D-ribose 1-diphosphate: step 5/9. IGPS catalyzes the conversion of PRFAR and glutamine to IGP, AICAR and glutamate. The HisF subunit catalyzes the cyclization activity that produces IGP and AICAR from PRFAR using the ammonia provided by the HisH subunit. This chain is Imidazole glycerol phosphate synthase subunit HisF, found in Methanococcoides burtonii (strain DSM 6242 / NBRC 107633 / OCM 468 / ACE-M).